The chain runs to 241 residues: Isoprenyl transferase (241 aa).

The active site involves Asp-17. Asp-17 is a binding site for Mg(2+). Residues 18–21 (GNGR), Trp-22, Arg-30, His-34, and 62–64 (STE) contribute to the substrate site. Asn-65 serves as the catalytic Proton acceptor. Residues Trp-66, Arg-68, Arg-186, and 192–194 (RLS) contribute to the substrate site. Glu-205 contacts Mg(2+).

It belongs to the UPP synthase family. In terms of assembly, homodimer. Mg(2+) serves as cofactor.

In terms of biological role, catalyzes the condensation of isopentenyl diphosphate (IPP) with allylic pyrophosphates generating different type of terpenoids. This chain is Isoprenyl transferase, found in Leptospira interrogans serogroup Icterohaemorrhagiae serovar copenhageni (strain Fiocruz L1-130).